Consider the following 176-residue polypeptide: Translation initiation factor IF-3 (176 aa).

The protein belongs to the IF-3 family. Monomer.

It localises to the cytoplasm. Functionally, IF-3 binds to the 30S ribosomal subunit and shifts the equilibrium between 70S ribosomes and their 50S and 30S subunits in favor of the free subunits, thus enhancing the availability of 30S subunits on which protein synthesis initiation begins. This is Translation initiation factor IF-3 from Streptococcus thermophilus (strain ATCC BAA-491 / LMD-9).